Reading from the N-terminus, the 145-residue chain is Ribonuclease H (145 aa).

One can recognise an RNase H type-1 domain in the interval 1-141; it reads MQEVTIYSDG…ADALANRGVA (141 aa). The Mg(2+) site is built by aspartate 9, glutamate 47, aspartate 69, and aspartate 133.

Belongs to the RNase H family. In terms of assembly, monomer. Mg(2+) serves as cofactor.

Its subcellular location is the cytoplasm. The catalysed reaction is Endonucleolytic cleavage to 5'-phosphomonoester.. In terms of biological role, endonuclease that specifically degrades the RNA of RNA-DNA hybrids. The polypeptide is Ribonuclease H (Cupriavidus metallidurans (strain ATCC 43123 / DSM 2839 / NBRC 102507 / CH34) (Ralstonia metallidurans)).